Reading from the N-terminus, the 504-residue chain is Phosphoenolpyruvate carboxylase (504 aa).

The segment covering 1–16 (MTSRKIPSIMGTQHPD) has biased composition (polar residues). The tract at residues 1–21 (MTSRKIPSIMGTQHPDNANAP) is disordered.

Belongs to the PEPCase type 2 family. In terms of assembly, homotetramer. Mg(2+) is required as a cofactor.

The enzyme catalyses oxaloacetate + phosphate = phosphoenolpyruvate + hydrogencarbonate. Functionally, catalyzes the irreversible beta-carboxylation of phosphoenolpyruvate (PEP) to form oxaloacetate (OAA), a four-carbon dicarboxylic acid source for the tricarboxylic acid cycle. This chain is Phosphoenolpyruvate carboxylase, found in Leuconostoc mesenteroides subsp. mesenteroides (strain ATCC 8293 / DSM 20343 / BCRC 11652 / CCM 1803 / JCM 6124 / NCDO 523 / NBRC 100496 / NCIMB 8023 / NCTC 12954 / NRRL B-1118 / 37Y).